The primary structure comprises 329 residues: Serine/threonine-protein phosphatase PP1-alpha (329 aa).

Residues Asp64, His66, Asp92, and Asn124 each coordinate Mn(2+). His125 (proton donor) is an active-site residue. Mn(2+) contacts are provided by His173 and His248. The interval 309-329 (GMNSGRPAVGGGRPGTTAGKK) is disordered.

Belongs to the PPP phosphatase family. PP-1 subfamily. Interacts with lab-1; the interaction is direct. Interacts with knl-1; the interaction is direct. Mn(2+) is required as a cofactor.

It catalyses the reaction O-phospho-L-seryl-[protein] + H2O = L-seryl-[protein] + phosphate. It carries out the reaction O-phospho-L-threonyl-[protein] + H2O = L-threonyl-[protein] + phosphate. Functionally, serine/threonine-protein phosphatase which antagonizes the function of air-2 in the regulation of chromosome cohesion. Dephosphorylates histone H3 at 'Ser-10'. Dephosphorylates translation initiation factor eIF2alpha. Involved in the activation of chloride channel clh-3 during cell swelling and meiotic maturation. The sequence is that of Serine/threonine-protein phosphatase PP1-alpha (gsp-1) from Caenorhabditis briggsae.